A 568-amino-acid chain; its full sequence is MFS-type efflux transporter phmH (568 aa).

The segment covering 1–11 has biased composition (polar residues); sequence MVSGTDTTEVG. The tract at residues 1 to 39 is disordered; the sequence is MVSGTDTTEVGATTKAPPSEGTEGILDDHSSNSQPQAEK. A run of 7 helical transmembrane segments spans residues 45 to 65, 101 to 121, 134 to 154, 161 to 181, 199 to 219, 237 to 257, and 268 to 288; these read YPLSFWLAFLGLCCTGLVSAL, YVMIGATIIFILGSGLCGGSS, GIGAGGINMLIDMIICDLVPM, IGLLFLFVSLGATIGPFVGGI, IFYINLPFGGVALLLLILFLH, VIGNSILIGATFAILYALTYG, and IAAPLTIGLVGLVAAFFWEMS. N303 carries an N-linked (GlcNAc...) asparagine glycan. The next 6 helical transmembrane spans lie at 307 to 327, 344 to 364, 372 to 392, 399 to 419, 437 to 457, and 515 to 535; these read AAAFFISFMCMLLAFWINFFY, VYTLPRAIAFPLFAAVGGAIV, TVHLVSTGIMPLVMGLSSILD, EWVIWQLLFGVSGGMMISTTL, TWSFVRSLGTIWGLSIPAAIF, and IGIVFGGVTFLSVFFEKEIHL. N-linked (GlcNAc...) asparagine glycosylation is present at N563.

The protein belongs to the major facilitator superfamily.

The protein resides in the cell membrane. Functionally, MFS-type efflux transporter; part of the gene cluster that mediates the biosynthesis of thethe mycotoxins phomacins, leucine-derived cytochalasans with potent actin polymerization-inhibitory activities and monocot-specific antigerminative activities. PhmH might be involved in the excretion of phomacins. This chain is MFS-type efflux transporter phmH, found in Phaeosphaeria nodorum (strain SN15 / ATCC MYA-4574 / FGSC 10173) (Glume blotch fungus).